The primary structure comprises 329 residues: ATPase ASNA1 homolog 1 (329 aa).

Residue 26–33 (KGGVGKTT) participates in ATP binding. The active site involves aspartate 55. ATP is bound by residues glutamate 235 and asparagine 262. 2 residues coordinate Zn(2+): cysteine 271 and cysteine 274.

It belongs to the arsA ATPase family. In terms of assembly, homodimer.

The protein localises to the cytoplasm. It localises to the endoplasmic reticulum. In terms of biological role, ATPase required for the post-translational delivery of tail-anchored (TA) proteins to the endoplasmic reticulum. Recognizes and selectively binds the transmembrane domain of TA proteins in the cytosol. This complex then targets to the endoplasmic reticulum by membrane-bound receptors, where the tail-anchored protein is released for insertion. This process is regulated by ATP binding and hydrolysis. ATP binding drives the homodimer towards the closed dimer state, facilitating recognition of newly synthesized TA membrane proteins. ATP hydrolysis is required for insertion. Subsequently, the homodimer reverts towards the open dimer state, lowering its affinity for the membrane-bound receptor, and returning it to the cytosol to initiate a new round of targeting. The sequence is that of ATPase ASNA1 homolog 1 from Paramecium tetraurelia.